Consider the following 250-residue polypeptide: Protein lin-28 homolog B (250 aa).

Residues 1–26 (MAEGGASKGGGEEPGKLPEPAEEESQ) are disordered. Positions 29–102 (RGTGHCKWFN…GLESIRVTGP (74 aa)) constitute a CSD domain. Phosphoserine occurs at positions 54, 96, 105, and 110. The disordered stretch occupies residues 98-126 (RVTGPGGSPCLGSERRPKGKTLQKRKPKG). The Bipartite nuclear localization signal motif lies at 112 to 125 (RRPKGKTLQKRKPK). A compositionally biased stretch (basic residues) spans 114–125 (PKGKTLQKRKPK). 2 consecutive CCHC-type zinc fingers follow at residues 127 to 144 (DRCY…ECSL) and 149 to 166 (KKCH…NCPH). Residues C129, C132, H137, C142, C151, C154, H159, and C164 each contribute to the Zn(2+) site. The tract at residues 169 to 250 (VAQPPASSQG…GPSVQKRKKT (82 aa)) is disordered. Polar residues predominate over residues 173-191 (PASSQGRQEAESQPCTSTL). Position 203 is a phosphoserine (S203). A compositionally biased stretch (basic and acidic residues) spans 210–219 (ARAEISERSG). A compositionally biased stretch (polar residues) spans 220–231 (RSPQEASSTKSS). The short motif at 239–250 (KKGPSVQKRKKT) is the Nucleolar localization signal element.

Belongs to the lin-28 family. Expressed at high levels in the placenta and, at mucher lower, in testis and fetal liver. Isoform 1 is only detected in placenta and in moderately and poorly differentiated hepatocellular carcinoma cells (at protein level). Isoform 2 is detected in fetal liver, non-tumor liver tissues, as well as well-differentiated tumor tissues (at protein level). Tends to be up-regulated in triple-negative (ER-,PR-,HER2-) breast tumors, as well as in liver, ovarian, and thyroid carcinomas.

It is found in the nucleus. The protein localises to the nucleolus. Its subcellular location is the cytoplasm. In terms of biological role, suppressor of microRNA (miRNA) biogenesis, including that of let-7 and possibly of miR107, miR-143 and miR-200c. Binds primary let-7 transcripts (pri-let-7), including pri-let-7g and pri-let-7a-1, and sequester them in the nucleolus, away from the microprocessor complex, hence preventing their processing into mature miRNA. Does not act on pri-miR21. The repression of let-7 expression is required for normal development and contributes to maintain the pluripotent state of embryonic stem cells by preventing let-7-mediated differentiation. When overexpressed, recruits ZCCHC11/TUT4 uridylyltransferase to pre-let-7 transcripts, leading to their terminal uridylation and degradation. This activity might not be relevant in vivo, as LIN28B-mediated inhibition of let-7 miRNA maturation appears to be ZCCHC11-independent. Interaction with target pre-miRNAs occurs via an 5'-GGAG-3' motif in the pre-miRNA terminal loop. Mediates MYC-induced let-7 repression. When overexpressed, isoform 1 stimulates growth of the breast adenocarcinoma cell line MCF-7. Isoform 2 has no effect on cell growth. The polypeptide is Protein lin-28 homolog B (LIN28B) (Homo sapiens (Human)).